The sequence spans 423 residues: Imidazolonepropionase (423 aa).

The Fe(3+) site is built by histidine 80 and histidine 82. Positions 80 and 82 each coordinate Zn(2+). 4-imidazolone-5-propanoate contacts are provided by arginine 89, tyrosine 152, and histidine 185. N-formimidoyl-L-glutamate is bound at residue tyrosine 152. Histidine 250 is a Fe(3+) binding site. Histidine 250 provides a ligand contact to Zn(2+). Residue glutamine 253 participates in 4-imidazolone-5-propanoate binding. Aspartate 325 provides a ligand contact to Fe(3+). Aspartate 325 is a binding site for Zn(2+). Residues asparagine 327 and glycine 329 each contribute to the N-formimidoyl-L-glutamate site. Threonine 330 provides a ligand contact to 4-imidazolone-5-propanoate.

Belongs to the metallo-dependent hydrolases superfamily. HutI family. The cofactor is Zn(2+). Fe(3+) serves as cofactor.

The protein resides in the cytoplasm. The enzyme catalyses 4-imidazolone-5-propanoate + H2O = N-formimidoyl-L-glutamate. It participates in amino-acid degradation; L-histidine degradation into L-glutamate; N-formimidoyl-L-glutamate from L-histidine: step 3/3. Catalyzes the hydrolytic cleavage of the carbon-nitrogen bond in imidazolone-5-propanoate to yield N-formimidoyl-L-glutamate. It is the third step in the universal histidine degradation pathway. This is Imidazolonepropionase from Cupriavidus pinatubonensis (strain JMP 134 / LMG 1197) (Cupriavidus necator (strain JMP 134)).